The sequence spans 556 residues: Phenylalanine--tRNA ligase beta subunit (556 aa).

The 76-residue stretch at 278 to 353 folds into the B5 domain; sequence LTPKRFEVEL…IAYGYNNIEP (76 aa). Residues Asp-331, Asp-337, Glu-340, and Asp-341 each coordinate Mg(2+).

This sequence belongs to the phenylalanyl-tRNA synthetase beta subunit family. Type 2 subfamily. As to quaternary structure, tetramer of two alpha and two beta subunits. Requires Mg(2+) as cofactor.

Its subcellular location is the cytoplasm. It carries out the reaction tRNA(Phe) + L-phenylalanine + ATP = L-phenylalanyl-tRNA(Phe) + AMP + diphosphate + H(+). The polypeptide is Phenylalanine--tRNA ligase beta subunit (Pyrococcus abyssi (strain GE5 / Orsay)).